The primary structure comprises 249 residues: Exosome complex component Rrp4 (249 aa).

Residues 73–144 form the S1 motif domain; the sequence is NDIVIGLVED…RSIDPVLSVK (72 aa). The KH domain occupies 154–211; sequence GIVIDIMPVKVPRVIGKNKSMYETLTSKSGCSIFVANNGRIWATCPSRFSEEILIEAI.

Belongs to the RRP4 family. In terms of assembly, component of the archaeal exosome complex. Forms a trimer of Rrp4 and/or Csl4 subunits. The trimer associates with a hexameric ring-like arrangement composed of 3 Rrp41-Rrp42 heterodimers.

The protein resides in the cytoplasm. Its function is as follows. Non-catalytic component of the exosome, which is a complex involved in RNA degradation. Increases the RNA binding and the efficiency of RNA degradation. Confers strong poly(A) specificity to the exosome. The polypeptide is Exosome complex component Rrp4 (Saccharolobus solfataricus (strain ATCC 35092 / DSM 1617 / JCM 11322 / P2) (Sulfolobus solfataricus)).